Consider the following 229-residue polypeptide: Extracellular small neutral protease (229 aa).

An N-terminal signal peptide occupies residues 1-28 (MRMPLSVLTAAGLSLATLGLGTAGPASA). Positions 29-81 (TPTAEGAPVVAYDGSPSAGSPADAKAEAAANRAFFEAVLRSVAEKRAANPKST) are excised as a propeptide. Ca(2+)-binding residues include D159 and T161. H166 contributes to the Zn(2+) binding site. E167 is an active-site residue. Zn(2+) is bound by residues H170 and D176. Residues C182 and C195 are joined by a disulfide bond.

Belongs to the peptidase M7 family. As to quaternary structure, monomer. The cofactor is Ca(2+). Zn(2+) is required as a cofactor.

The protein localises to the secreted. It carries out the reaction Hydrolyzes proteins with a preference for Tyr or Phe in the P1' position. Has no action on amino-acid p-nitroanilides.. Milk hydrolyzing. This is Extracellular small neutral protease (snpA) from Streptomyces sp. (strain C5).